Here is a 98-residue protein sequence, read N- to C-terminus: Small ribosomal subunit protein uS19 (98 aa).

Residues 77–98 form a disordered region; the sequence is TRTYRGHAGGKSEKGGSAPRKK.

Belongs to the universal ribosomal protein uS19 family.

Protein S19 forms a complex with S13 that binds strongly to the 16S ribosomal RNA. This is Small ribosomal subunit protein uS19 from Chlorobium phaeobacteroides (strain BS1).